Here is a 337-residue protein sequence, read N- to C-terminus: Fructose-1,6-bisphosphatase class 1 (337 aa).

Mg(2+)-binding residues include Glu-89, Asp-112, Leu-114, and Asp-115. Residues 115 to 118 (DGSS), Asn-208, Tyr-241, and Lys-271 each bind substrate. Glu-277 contacts Mg(2+).

The protein belongs to the FBPase class 1 family. Homotetramer. The cofactor is Mg(2+).

It localises to the cytoplasm. The enzyme catalyses beta-D-fructose 1,6-bisphosphate + H2O = beta-D-fructose 6-phosphate + phosphate. It participates in carbohydrate biosynthesis; gluconeogenesis. The polypeptide is Fructose-1,6-bisphosphatase class 1 (Yersinia pestis bv. Antiqua (strain Antiqua)).